Reading from the N-terminus, the 559-residue chain is Branched-chain-amino-acid aminotransferase-like protein 2 (559 aa).

It belongs to the class-IV pyridoxal-phosphate-dependent aminotransferase family.

This chain is Branched-chain-amino-acid aminotransferase-like protein 2, found in Arabidopsis thaliana (Mouse-ear cress).